We begin with the raw amino-acid sequence, 138 residues long: Small ribosomal subunit protein bS6 (138 aa).

The disordered stretch occupies residues 100-138 (SPLAKGREEDDSDSSARRARDDSDDDGDDDEDDRRASAD). Residues 121–131 (DSDDDGDDDED) are compositionally biased toward acidic residues.

The protein belongs to the bacterial ribosomal protein bS6 family.

Functionally, binds together with bS18 to 16S ribosomal RNA. The sequence is that of Small ribosomal subunit protein bS6 from Thioalkalivibrio sulfidiphilus (strain HL-EbGR7).